Here is a 457-residue protein sequence, read N- to C-terminus: Heme sensor protein HssS (457 aa).

Transmembrane regions (helical) follow at residues 9–29 (IAIY…VLTN) and 164–184 (TFLA…VIAS). The 53-residue stretch at 186 to 238 (YSIIRPVKKLKLATERLIDGDFETPIKQTRKDEIGTLQYHFNKMRESLGQVDQ) folds into the HAMP domain. The 211-residue stretch at 246-456 (NVSHEIKTPL…TFTITLPNNS (211 aa)) folds into the Histidine kinase domain. His249 is modified (phosphohistidine; by autocatalysis).

Autophosphorylated.

The protein localises to the cell membrane. The enzyme catalyses ATP + protein L-histidine = ADP + protein N-phospho-L-histidine.. In terms of biological role, member of the two-component regulatory system HssS/HssR involved in intracellular heme homeostasis and tempering of staphylococcal virulence. HssS functions as a heme sensor histidine kinase which is autophosphorylated at a histidine residue and transfers its phosphate group to an aspartate residue of HssR. HssR/HssS activates the expression of hrtAB, an efflux pump, in response to extracellular heme, hemin, hemoglobin or blood. The sequence is that of Heme sensor protein HssS (hssS) from Staphylococcus aureus (strain MSSA476).